The sequence spans 231 residues: Small ribosomal subunit protein uS3 (231 aa).

One can recognise a KH type-2 domain in the interval 38–106 (IRVYLKNRLK…KTFVNIMEIK (69 aa)).

Belongs to the universal ribosomal protein uS3 family. As to quaternary structure, part of the 30S ribosomal subunit. Forms a tight complex with proteins S10 and S14.

Binds the lower part of the 30S subunit head. Binds mRNA in the 70S ribosome, positioning it for translation. This is Small ribosomal subunit protein uS3 from Endomicrobium trichonymphae.